A 336-amino-acid polypeptide reads, in one-letter code: MLSYAPENAYQRASTMENKKVFPKEKSGLHPRNRHRSRYDFDALSVSCPELIPFLAPTAYGDISVDFADPLAVKMLNKALLKHFYGIEYWDIPADSLCPPIPGRADYVHHLADLLASCNGEVIPKGKNIALLDIGVGANCIYPIIGQREYGWRFTGTDIDSHALSAAKMVVSMNPTLKNTLRLKQQKDPHAIFEGVWAVNERYDATLCNPPFHGSAEEAAATTRRKLHKLGKNEVAAKPVQNFGGKNSELWCEGGEEGFVSRMVAESVAKAQNCFWFTSLISKKTTLPAIYHALRYVKAVEVRTIEMAQGQKVSRFVAWTFLTPEQQAAWVAERWA.

Belongs to the methyltransferase superfamily. METTL16/RlmF family.

The protein resides in the cytoplasm. It carries out the reaction adenosine(1618) in 23S rRNA + S-adenosyl-L-methionine = N(6)-methyladenosine(1618) in 23S rRNA + S-adenosyl-L-homocysteine + H(+). Its function is as follows. Specifically methylates the adenine in position 1618 of 23S rRNA. The protein is Ribosomal RNA large subunit methyltransferase F of Yersinia pseudotuberculosis serotype I (strain IP32953).